The chain runs to 113 residues: CWELYWLEHGIQPDGMMPSDTTVGVGDDAFNTFFSETGAGKHVPRAVFVDLEPTVIDEVRTGAYRQLFHPEQLISGKEDAANNFARGHYTVGEEIVDLCLDRVRKLADNCTGL.

Glu-52 contacts GTP. Glu-52 is a Mg(2+) binding site.

Belongs to the tubulin family. Dimer of alpha and beta chains. A typical microtubule is a hollow water-filled tube with an outer diameter of 25 nm and an inner diameter of 15 nM. Alpha-beta heterodimers associate head-to-tail to form protofilaments running lengthwise along the microtubule wall with the beta-tubulin subunit facing the microtubule plus end conferring a structural polarity. Microtubules usually have 13 protofilaments but different protofilament numbers can be found in some organisms and specialized cells. Mg(2+) serves as cofactor.

The protein resides in the cytoplasm. The protein localises to the cytoskeleton. It catalyses the reaction GTP + H2O = GDP + phosphate + H(+). Functionally, tubulin is the major constituent of microtubules, a cylinder consisting of laterally associated linear protofilaments composed of alpha- and beta-tubulin heterodimers. Microtubules grow by the addition of GTP-tubulin dimers to the microtubule end, where a stabilizing cap forms. Below the cap, tubulin dimers are in GDP-bound state, owing to GTPase activity of alpha-tubulin. In Picea abies (Norway spruce), this protein is Tubulin alpha chain (TUBA).